The chain runs to 273 residues: DNA repair protein RecO (273 aa).

Residues 250-273 (NVGQNPSGKDDLNERRDVDGTGES) are disordered. Positions 257–273 (GKDDLNERRDVDGTGES) are enriched in basic and acidic residues.

This sequence belongs to the RecO family.

Involved in DNA repair and RecF pathway recombination. This is DNA repair protein RecO from Desulfitobacterium hafniense (strain DSM 10664 / DCB-2).